The primary structure comprises 489 residues: Rhamnulokinase (489 aa).

Ala13–Arg17 contributes to the ATP binding site. Cys68 and Cys222 are joined by a disulfide. Residues Gly83 and His236 to Thr238 each bind substrate. Asp237 serves as the catalytic Proton acceptor. An ATP-binding site is contributed by Thr259. Asn296 contacts substrate. Residue Gln304 participates in ATP binding. Cys353 and Cys370 are oxidised to a cystine. Gly402 contacts ATP. The cysteines at positions 413 and 417 are disulfide-linked.

The protein belongs to the rhamnulokinase family. Monomer. It depends on Mg(2+) as a cofactor.

The catalysed reaction is L-rhamnulose + ATP = L-rhamnulose 1-phosphate + ADP + H(+). The protein operates within carbohydrate degradation; L-rhamnose degradation; glycerone phosphate from L-rhamnose: step 2/3. Its function is as follows. Involved in the catabolism of L-rhamnose (6-deoxy-L-mannose). Catalyzes the transfer of the gamma-phosphate group from ATP to the 1-hydroxyl group of L-rhamnulose to yield L-rhamnulose 1-phosphate. This Escherichia coli O7:K1 (strain IAI39 / ExPEC) protein is Rhamnulokinase.